The following is a 154-amino-acid chain: Ribonuclease H (154 aa).

The 142-residue stretch at Lys7–Ala148 folds into the RNase H type-1 domain. Residues Asp16, Glu54, Asp76, and Asp140 each contribute to the Mg(2+) site.

The protein belongs to the RNase H family. Monomer. It depends on Mg(2+) as a cofactor.

Its subcellular location is the cytoplasm. The catalysed reaction is Endonucleolytic cleavage to 5'-phosphomonoester.. Its function is as follows. Endonuclease that specifically degrades the RNA of RNA-DNA hybrids. The sequence is that of Ribonuclease H from Paramagnetospirillum magneticum (strain ATCC 700264 / AMB-1) (Magnetospirillum magneticum).